The sequence spans 270 residues: 4-hydroxy-tetrahydrodipicolinate reductase (270 aa).

Residues 9-14 (GSGGRM) and glutamate 35 each bind NAD(+). Arginine 36 provides a ligand contact to NADP(+). NAD(+) contacts are provided by residues 99–101 (GTT) and 123–126 (ASNY). Histidine 156 serves as the catalytic Proton donor/acceptor. Residue histidine 157 coordinates (S)-2,3,4,5-tetrahydrodipicolinate. Lysine 160 acts as the Proton donor in catalysis. (S)-2,3,4,5-tetrahydrodipicolinate is bound at residue 166–167 (GT).

It belongs to the DapB family.

It is found in the cytoplasm. It catalyses the reaction (S)-2,3,4,5-tetrahydrodipicolinate + NAD(+) + H2O = (2S,4S)-4-hydroxy-2,3,4,5-tetrahydrodipicolinate + NADH + H(+). The catalysed reaction is (S)-2,3,4,5-tetrahydrodipicolinate + NADP(+) + H2O = (2S,4S)-4-hydroxy-2,3,4,5-tetrahydrodipicolinate + NADPH + H(+). The protein operates within amino-acid biosynthesis; L-lysine biosynthesis via DAP pathway; (S)-tetrahydrodipicolinate from L-aspartate: step 4/4. In terms of biological role, catalyzes the conversion of 4-hydroxy-tetrahydrodipicolinate (HTPA) to tetrahydrodipicolinate. The protein is 4-hydroxy-tetrahydrodipicolinate reductase of Histophilus somni (strain 2336) (Haemophilus somnus).